Reading from the N-terminus, the 119-residue chain is Large ribosomal subunit protein bL20 (119 aa).

This sequence belongs to the bacterial ribosomal protein bL20 family.

Binds directly to 23S ribosomal RNA and is necessary for the in vitro assembly process of the 50S ribosomal subunit. It is not involved in the protein synthesizing functions of that subunit. The protein is Large ribosomal subunit protein bL20 of Geobacillus sp. (strain WCH70).